Consider the following 394-residue polypeptide: 8-amino-7-oxononanoate synthase (394 aa).

Position 21 (arginine 21) interacts with substrate. Pyridoxal 5'-phosphate is bound at residue 112 to 113 (GY). Substrate is bound at residue histidine 137. The pyridoxal 5'-phosphate site is built by serine 183, histidine 211, and threonine 239. N6-(pyridoxal phosphate)lysine is present on lysine 242. Threonine 358 is a binding site for substrate.

Belongs to the class-II pyridoxal-phosphate-dependent aminotransferase family. BioF subfamily. In terms of assembly, homodimer. Pyridoxal 5'-phosphate is required as a cofactor.

It catalyses the reaction 6-carboxyhexanoyl-[ACP] + L-alanine + H(+) = (8S)-8-amino-7-oxononanoate + holo-[ACP] + CO2. The protein operates within cofactor biosynthesis; biotin biosynthesis. In terms of biological role, catalyzes the decarboxylative condensation of pimeloyl-[acyl-carrier protein] and L-alanine to produce 8-amino-7-oxononanoate (AON), [acyl-carrier protein], and carbon dioxide. The polypeptide is 8-amino-7-oxononanoate synthase (Burkholderia cenocepacia (strain ATCC BAA-245 / DSM 16553 / LMG 16656 / NCTC 13227 / J2315 / CF5610) (Burkholderia cepacia (strain J2315))).